Reading from the N-terminus, the 508-residue chain is Carboxypeptidase Y homolog ARB_05721 (508 aa).

Positions 1-25 (MELYLNMLSFWYILLATSFFGPSQA) are cleaved as a signal peptide. N-linked (GlcNAc...) asparagine glycans are attached at residues Asn-132 and Asn-169. Ser-204 is a catalytic residue. N-linked (GlcNAc...) asparagine glycosylation occurs at Asn-268. Intrachain disulfides connect Cys-282/Cys-305, Cys-289/Cys-298, and Cys-332/Cys-338. The active site involves Asp-410. Cys-413 lines the substrate pocket. The N-linked (GlcNAc...) asparagine glycan is linked to Asn-451. His-484 is an active-site residue. Met-485 contributes to the substrate binding site.

This sequence belongs to the peptidase S10 family.

It localises to the secreted. It catalyses the reaction Release of a C-terminal amino acid with broad specificity.. In terms of biological role, involved in degradation of small peptides. This Arthroderma benhamiae (strain ATCC MYA-4681 / CBS 112371) (Trichophyton mentagrophytes) protein is Carboxypeptidase Y homolog ARB_05721.